Here is a 150-residue protein sequence, read N- to C-terminus: Urease accessory protein UreE (150 aa).

The protein belongs to the UreE family.

The protein resides in the cytoplasm. Functionally, involved in urease metallocenter assembly. Binds nickel. Probably functions as a nickel donor during metallocenter assembly. The protein is Urease accessory protein UreE of Streptococcus vestibularis.